Here is a 310-residue protein sequence, read N- to C-terminus: Malate dehydrogenase (310 aa).

NAD(+) is bound by residues 7 to 12 (GAGNVG) and Asp32. Substrate-binding residues include Arg81 and Arg87. NAD(+) is bound by residues Asn94 and 117 to 119 (VSN). Substrate is bound by residues Asn119 and Arg150. His174 functions as the Proton acceptor in the catalytic mechanism.

It belongs to the LDH/MDH superfamily. MDH type 3 family. In terms of assembly, homotetramer; arranged as a dimer of dimers.

It carries out the reaction (S)-malate + NAD(+) = oxaloacetate + NADH + H(+). Its function is as follows. Catalyzes the reversible oxidation of malate to oxaloacetate. The chain is Malate dehydrogenase from Chlorobaculum tepidum (strain ATCC 49652 / DSM 12025 / NBRC 103806 / TLS) (Chlorobium tepidum).